We begin with the raw amino-acid sequence, 967 residues long: Regulator of G-protein signaling 3 (967 aa).

The PDZ domain maps to Gln18–Val95. The tract at residues Thr115–Thr135 is disordered. Omega-N-methylarginine is present on Arg167. Residues Gln389 to Asn705 form a disordered region. 3 stretches are compositionally biased toward polar residues: residues Leu476–Gln486, Ser512–Pro549, and Ser577–Leu597. Residues Gly650 to Asn676 show a composition bias toward acidic residues. Over residues Tyr677–Ser687 the composition is skewed to basic and acidic residues. Phosphoserine is present on residues Ser713, Ser716, Ser748, and Ser777. Positions Phe807 to Lys830 are disordered. Positions Lys821–Lys830 are enriched in basic and acidic residues. Positions Ser842–Leu967 constitute an RGS domain.

Binds EFNB1 and EFNB2. Binds the GNB1-GNG2 heterodimer. Binds ESR1. In terms of processing, phosphorylated by cyclic GMP-dependent protein kinase. Post-translationally, ISGylated. Detected in kidney, uterus, ovary, heart, brain, spleen, lung and testis.

Its subcellular location is the cytoplasm. The protein localises to the membrane. The protein resides in the nucleus. Its function is as follows. Down-regulates signaling from heterotrimeric G-proteins by increasing the GTPase activity of the alpha subunits, thereby driving them into their inactive GDP-bound form. Down-regulates G-protein-mediated release of inositol phosphates and activation of MAP kinases. The sequence is that of Regulator of G-protein signaling 3 (Rgs3) from Rattus norvegicus (Rat).